A 301-amino-acid chain; its full sequence is Acetylglutamate kinase (301 aa).

Substrate contacts are provided by residues 76–77, R98, and N192; that span reads GG.

The protein belongs to the acetylglutamate kinase family. ArgB subfamily.

It is found in the cytoplasm. The catalysed reaction is N-acetyl-L-glutamate + ATP = N-acetyl-L-glutamyl 5-phosphate + ADP. Its pathway is amino-acid biosynthesis; L-arginine biosynthesis; N(2)-acetyl-L-ornithine from L-glutamate: step 2/4. Functionally, catalyzes the ATP-dependent phosphorylation of N-acetyl-L-glutamate. The sequence is that of Acetylglutamate kinase from Chlorobaculum parvum (strain DSM 263 / NCIMB 8327) (Chlorobium vibrioforme subsp. thiosulfatophilum).